A 43-amino-acid polypeptide reads, in one-letter code: Myotoxin-2 (43 aa).

3 disulfide bridges follow: Cys-4–Cys-36, Cys-11–Cys-30, and Cys-18–Cys-37.

This sequence belongs to the crotamine-myotoxin family. As to quaternary structure, monomer. As to expression, expressed by the venom gland.

It localises to the secreted. Functionally, cationic peptide that possesses multiple functions. It acts as a cell-penetrating peptide (CPP), and as a potent voltage-gated potassium channel (Kv) inhibitor. It exhibits antimicrobial activities, hind limb paralysis, and severe muscle necrosis by a non-enzymatic mechanism. The chain is Myotoxin-2 from Crotalus concolor (Midget faded rattlesnake).